The sequence spans 183 residues: Ribulose bisphosphate carboxylase small subunit, chloroplastic (183 aa).

The transit peptide at 1-59 directs the protein to the chloroplast; that stretch reads MASSMISSGTVATVSADRPAPAQARMVAPFTGLKSSSASPVTRKSNDITSIASNGGRVQ.

It belongs to the RuBisCO small chain family. In terms of assembly, heterohexadecamer of 8 large and 8 small subunits.

It is found in the plastid. The protein localises to the chloroplast. In terms of biological role, ruBisCO catalyzes two reactions: the carboxylation of D-ribulose 1,5-bisphosphate, the primary event in carbon dioxide fixation, as well as the oxidative fragmentation of the pentose substrate. Both reactions occur simultaneously and in competition at the same active site. Although the small subunit is not catalytic it is essential for maximal activity. In Malus sp. (Crab apple), this protein is Ribulose bisphosphate carboxylase small subunit, chloroplastic.